Here is a 300-residue protein sequence, read N- to C-terminus: Tyrosine recombinase XerC (300 aa).

The Core-binding (CB) domain occupies 2 to 88 (IQEGKLEQQF…SLRSFYTFLL (87 aa)). Positions 109–294 (RLPKFFYSEE…TKEHLKSTYM (186 aa)) constitute a Tyr recombinase domain. Residues R150, K174, H246, R249, and H272 contribute to the active site. Y281 acts as the O-(3'-phospho-DNA)-tyrosine intermediate in catalysis.

Belongs to the 'phage' integrase family. XerC subfamily. In terms of assembly, forms a cyclic heterotetrameric complex composed of two molecules of XerC and two molecules of XerD.

The protein localises to the cytoplasm. Its function is as follows. Site-specific tyrosine recombinase, which acts by catalyzing the cutting and rejoining of the recombining DNA molecules. The XerC-XerD complex is essential to convert dimers of the bacterial chromosome into monomers to permit their segregation at cell division. It also contributes to the segregational stability of plasmids. The protein is Tyrosine recombinase XerC of Listeria monocytogenes serovar 1/2a (strain ATCC BAA-679 / EGD-e).